The sequence spans 350 residues: Small ribosomal subunit biogenesis GTPase RsgA (350 aa).

A compositionally biased stretch (polar residues) spans 1-17 (MSKNKLSKGQQRRVNAN). The segment at 1 to 33 (MSKNKLSKGQQRRVNANHQRRLKTSKEKPDYDD) is disordered. A CP-type G domain is found at 104–273 (TSVLTRPDFY…VIDSPGVREF (170 aa)). GTP contacts are provided by residues 160 to 163 (NKID) and 214 to 222 (GQSGVGKSS). 4 residues coordinate Zn(2+): C297, C302, H304, and C310.

Belongs to the TRAFAC class YlqF/YawG GTPase family. RsgA subfamily. In terms of assembly, monomer. Associates with 30S ribosomal subunit, binds 16S rRNA. Zn(2+) serves as cofactor.

The protein localises to the cytoplasm. Functionally, one of several proteins that assist in the late maturation steps of the functional core of the 30S ribosomal subunit. Helps release RbfA from mature subunits. May play a role in the assembly of ribosomal proteins into the subunit. Circularly permuted GTPase that catalyzes slow GTP hydrolysis, GTPase activity is stimulated by the 30S ribosomal subunit. The polypeptide is Small ribosomal subunit biogenesis GTPase RsgA (Shigella flexneri).